Here is a 542-residue protein sequence, read N- to C-terminus: CTP synthase (542 aa).

The interval 1 to 265 is amidoligase domain; that stretch reads MTRFIFITGG…DTQVLKFFGM (265 aa). Residue Ser-13 participates in CTP binding. Residue Ser-13 participates in UTP binding. An ATP-binding site is contributed by 14-19; it reads SLGKGL. An L-glutamine-binding site is contributed by Tyr-54. Asp-71 provides a ligand contact to ATP. The Mg(2+) site is built by Asp-71 and Glu-139. Residues 146–148, 186–191, and Lys-222 contribute to the CTP site; these read DIE and KTKPTQ. Residues 186–191 and Lys-222 contribute to the UTP site; that span reads KTKPTQ. The region spanning 291-541 is the Glutamine amidotransferase type-1 domain; that stretch reads TIAVVGKYTS…IRAAIEQSRL (251 aa). Residue Gly-353 coordinates L-glutamine. The active-site Nucleophile; for glutamine hydrolysis is the Cys-380. L-glutamine-binding positions include 381 to 384, Glu-404, and Arg-469; that span reads FGMQ. Active-site residues include His-514 and Glu-516.

This sequence belongs to the CTP synthase family. As to quaternary structure, homotetramer.

The catalysed reaction is UTP + L-glutamine + ATP + H2O = CTP + L-glutamate + ADP + phosphate + 2 H(+). The enzyme catalyses L-glutamine + H2O = L-glutamate + NH4(+). It carries out the reaction UTP + NH4(+) + ATP = CTP + ADP + phosphate + 2 H(+). The protein operates within pyrimidine metabolism; CTP biosynthesis via de novo pathway; CTP from UDP: step 2/2. Allosterically activated by GTP, when glutamine is the substrate; GTP has no effect on the reaction when ammonia is the substrate. The allosteric effector GTP functions by stabilizing the protein conformation that binds the tetrahedral intermediate(s) formed during glutamine hydrolysis. Inhibited by the product CTP, via allosteric rather than competitive inhibition. Functionally, catalyzes the ATP-dependent amination of UTP to CTP with either L-glutamine or ammonia as the source of nitrogen. Regulates intracellular CTP levels through interactions with the four ribonucleotide triphosphates. This is CTP synthase from Rhodospirillum centenum (strain ATCC 51521 / SW).